The primary structure comprises 551 residues: Ubiquitin carboxyl-terminal hydrolase 24 (551 aa).

Disordered stretches follow at residues 51–104 (NSSV…SLRV) and 163–188 (NEDF…TESV). Residues 197 to 551 (RGLINAGNLC…QAYVLFYKQV (355 aa)) form the USP domain. Catalysis depends on C206, which acts as the Nucleophile. Residues 329–338 (SKSSVISSAN) are compositionally biased toward polar residues. The interval 329–349 (SKSSVISSANDDGDEWETVGP) is disordered. The Proton acceptor role is filled by H510.

Belongs to the peptidase C19 family.

The enzyme catalyses Thiol-dependent hydrolysis of ester, thioester, amide, peptide and isopeptide bonds formed by the C-terminal Gly of ubiquitin (a 76-residue protein attached to proteins as an intracellular targeting signal).. Recognizes and hydrolyzes the peptide bond at the C-terminal Gly of ubiquitin. Involved in the processing of poly-ubiquitin precursors as well as that of ubiquitinated proteins. In Arabidopsis thaliana (Mouse-ear cress), this protein is Ubiquitin carboxyl-terminal hydrolase 24 (UBP24).